The primary structure comprises 100 residues: Large ribosomal subunit protein uL23 (100 aa).

This sequence belongs to the universal ribosomal protein uL23 family. In terms of assembly, part of the 50S ribosomal subunit. Contacts protein L29, and trigger factor when it is bound to the ribosome.

One of the early assembly proteins it binds 23S rRNA. One of the proteins that surrounds the polypeptide exit tunnel on the outside of the ribosome. Forms the main docking site for trigger factor binding to the ribosome. The sequence is that of Large ribosomal subunit protein uL23 from Prochlorococcus marinus subsp. pastoris (strain CCMP1986 / NIES-2087 / MED4).